The sequence spans 359 residues: Tyrosine-protein phosphatase non-receptor type 7 (359 aa).

Residues 1-34 (MVQACEGRSRAQLPTLSLGADMTQPPPAKAPAKK) are disordered. The interval 38–51 (LQERRGSSVALMLD) is interaction with MAP kinases. Residue Ser44 is modified to Phosphoserine. Position 66 is a phosphothreonine (Thr66). 2 positions are modified to phosphoserine: Ser93 and Ser143. A Tyrosine-protein phosphatase domain is found at 97-349 (LEEEFLKIPS…QFLHHTLALY (253 aa)). Residues Asp257, 290–296 (CSAGIGR), and Gln334 contribute to the substrate site. The Phosphocysteine intermediate role is filled by Cys290. A Cysteine sulfenic acid (-SOH) modification is found at Cys290.

The protein belongs to the protein-tyrosine phosphatase family. Non-receptor class subfamily. Post-translationally, oxidized at active site cysteine. Treatment with pervanadate (vanadate and H(2)O(2)) or with antigen enhanced oxidation of active site cysteine.

It is found in the cytoplasm. It localises to the cytoskeleton. The enzyme catalyses O-phospho-L-tyrosyl-[protein] + H2O = L-tyrosyl-[protein] + phosphate. With respect to regulation, inhibited in cells after FCER1A triggering. May play a role in the regulation of T and B-lymphocyte development and signal transduction. This Rattus norvegicus (Rat) protein is Tyrosine-protein phosphatase non-receptor type 7 (Ptpn7).